A 124-amino-acid chain; its full sequence is Large ribosomal subunit protein bL19 (124 aa).

It belongs to the bacterial ribosomal protein bL19 family.

This protein is located at the 30S-50S ribosomal subunit interface and may play a role in the structure and function of the aminoacyl-tRNA binding site. This chain is Large ribosomal subunit protein bL19, found in Orientia tsutsugamushi (strain Boryong) (Rickettsia tsutsugamushi).